The following is a 430-amino-acid chain: Serine--tRNA ligase (430 aa).

Position 236–238 (236–238) interacts with L-serine; the sequence is TAE. 267-269 serves as a coordination point for ATP; it reads RSE. Glu290 serves as a coordination point for L-serine. An ATP-binding site is contributed by 354–357; sequence EISS. Ser390 is an L-serine binding site.

It belongs to the class-II aminoacyl-tRNA synthetase family. Type-1 seryl-tRNA synthetase subfamily. As to quaternary structure, homodimer. The tRNA molecule binds across the dimer.

The protein resides in the cytoplasm. The enzyme catalyses tRNA(Ser) + L-serine + ATP = L-seryl-tRNA(Ser) + AMP + diphosphate + H(+). It catalyses the reaction tRNA(Sec) + L-serine + ATP = L-seryl-tRNA(Sec) + AMP + diphosphate + H(+). It functions in the pathway aminoacyl-tRNA biosynthesis; selenocysteinyl-tRNA(Sec) biosynthesis; L-seryl-tRNA(Sec) from L-serine and tRNA(Sec): step 1/1. Functionally, catalyzes the attachment of serine to tRNA(Ser). Is also able to aminoacylate tRNA(Sec) with serine, to form the misacylated tRNA L-seryl-tRNA(Sec), which will be further converted into selenocysteinyl-tRNA(Sec). This Idiomarina loihiensis (strain ATCC BAA-735 / DSM 15497 / L2-TR) protein is Serine--tRNA ligase.